The primary structure comprises 210 residues: Cytochrome c4 (210 aa).

Positions 1–20 (MNKALVTLLLTLGITGLAHA) are cleaved as a signal peptide. 8 residues coordinate heme c: Cys-34, Cys-37, His-38, Met-86, Cys-139, Cys-142, His-143, and Met-187.

In terms of processing, binds 2 heme c groups covalently per subunit.

It localises to the periplasm. In terms of biological role, diheme, high potential cytochrome c believed to be an intermediate electron donor to terminal oxidation systems. This Azotobacter vinelandii protein is Cytochrome c4 (cycA).